The following is a 227-amino-acid chain: Cytochrome c oxidase subunit 2 (227 aa).

Residues 1-14 lie on the Mitochondrial intermembrane side of the membrane; sequence MAYPFQLGLQDASS. A helical transmembrane segment spans residues 15 to 45; it reads PIMEELTNFHDHTLMIVFLISSLVLYIISSM. Topologically, residues 46-59 are mitochondrial matrix; that stretch reads LTTKMTHTSTMDAQ. The helical transmembrane segment at 60–87 threads the bilayer; it reads EVETIWTVLPAVILILIALPSLRILYMM. Residues 88–227 are Mitochondrial intermembrane-facing; the sequence is DEINNPVLTV…HFENWSTSMI (140 aa). Positions 161, 196, 198, 200, 204, and 207 each coordinate Cu cation. Glutamate 198 is a Mg(2+) binding site.

It belongs to the cytochrome c oxidase subunit 2 family. Component of the cytochrome c oxidase (complex IV, CIV), a multisubunit enzyme composed of 14 subunits. The complex is composed of a catalytic core of 3 subunits MT-CO1, MT-CO2 and MT-CO3, encoded in the mitochondrial DNA, and 11 supernumerary subunits COX4I, COX5A, COX5B, COX6A, COX6B, COX6C, COX7A, COX7B, COX7C, COX8 and NDUFA4, which are encoded in the nuclear genome. The complex exists as a monomer or a dimer and forms supercomplexes (SCs) in the inner mitochondrial membrane with NADH-ubiquinone oxidoreductase (complex I, CI) and ubiquinol-cytochrome c oxidoreductase (cytochrome b-c1 complex, complex III, CIII), resulting in different assemblies (supercomplex SCI(1)III(2)IV(1) and megacomplex MCI(2)III(2)IV(2)). Found in a complex with TMEM177, COA6, COX18, COX20, SCO1 and SCO2. Interacts with TMEM177 in a COX20-dependent manner. Interacts with COX20. Interacts with COX16. Requires Cu cation as cofactor.

It localises to the mitochondrion inner membrane. The enzyme catalyses 4 Fe(II)-[cytochrome c] + O2 + 8 H(+)(in) = 4 Fe(III)-[cytochrome c] + 2 H2O + 4 H(+)(out). In terms of biological role, component of the cytochrome c oxidase, the last enzyme in the mitochondrial electron transport chain which drives oxidative phosphorylation. The respiratory chain contains 3 multisubunit complexes succinate dehydrogenase (complex II, CII), ubiquinol-cytochrome c oxidoreductase (cytochrome b-c1 complex, complex III, CIII) and cytochrome c oxidase (complex IV, CIV), that cooperate to transfer electrons derived from NADH and succinate to molecular oxygen, creating an electrochemical gradient over the inner membrane that drives transmembrane transport and the ATP synthase. Cytochrome c oxidase is the component of the respiratory chain that catalyzes the reduction of oxygen to water. Electrons originating from reduced cytochrome c in the intermembrane space (IMS) are transferred via the dinuclear copper A center (CU(A)) of subunit 2 and heme A of subunit 1 to the active site in subunit 1, a binuclear center (BNC) formed by heme A3 and copper B (CU(B)). The BNC reduces molecular oxygen to 2 water molecules using 4 electrons from cytochrome c in the IMS and 4 protons from the mitochondrial matrix. In Lophuromys flavopunctatus (Yellow-spotted brush-furred rat), this protein is Cytochrome c oxidase subunit 2 (MT-CO2).